A 381-amino-acid polypeptide reads, in one-letter code: tRNA (guanine(26)-N(2))-dimethyltransferase (381 aa).

A Trm1 methyltransferase domain is found at 6–378 (FEVHEGKAKV…APYEVFVEVM (373 aa)). S-adenosyl-L-methionine is bound by residues Arg-38, Arg-63, Asp-80, Asp-122, and Ala-123.

This sequence belongs to the class I-like SAM-binding methyltransferase superfamily. Trm1 family. In terms of assembly, monomer.

The catalysed reaction is guanosine(26) in tRNA + 2 S-adenosyl-L-methionine = N(2)-dimethylguanosine(26) in tRNA + 2 S-adenosyl-L-homocysteine + 2 H(+). Functionally, dimethylates a single guanine residue at position 26 of a number of tRNAs using S-adenosyl-L-methionine as donor of the methyl groups. The protein is tRNA (guanine(26)-N(2))-dimethyltransferase of Pyrococcus furiosus (strain ATCC 43587 / DSM 3638 / JCM 8422 / Vc1).